We begin with the raw amino-acid sequence, 397 residues long: Translocase of chloroplast 34 homolog, chloroplastic (397 aa).

The interval 1-72 (MAQPPRPAEE…SQPWAGLNRL (72 aa)) is disordered. 2 stretches are compositionally biased toward acidic residues: residues 10–32 (EYDD…DDES) and 44–63 (AGDE…DEDS). The AIG1-type G domain occupies 90–321 (RKQLTVLLLG…YKYHPRLSSK (232 aa)). Positions 99 to 106 (GKSSVGKS) are G1. Residues 102–107 (SVGKSS) and 121–126 (QAFKLQ) contribute to the GTP site. Ser106 lines the Mg(2+) pocket. Residues 121–124 (QAFK) are homodimerization. Residues 126–130 (QADTD) are G2. The tract at residues 155–158 (DTCG) is G3. Positions 193–198 (RLDLYR) are homodimerization. The interval 227–230 (THAN) is G4. Residues His228 and 271–272 (EN) contribute to the GTP site. Residues 271–273 (ENS) form a G5 region. Residues 329–349 (LLPVAIAAEVLFYRRFLHPRL) traverse the membrane as a helical segment. Positions 350 to 358 (DDNQRRVER) match the AKR2A-binding sequence (ABS) required for chloroplast outer envelope membrane targeting motif.

It belongs to the TRAFAC class TrmE-Era-EngA-EngB-Septin-like GTPase superfamily. AIG1/Toc34/Toc159-like paraseptin GTPase family. TOC34 subfamily. Homodimer, heterodimer with other TOC proteins, and monomer. Part of the TOC core complex that includes 1 protein for the specific recognition of transit peptides surrounded by a ring composed of four proteins forming translocation channels, and four to five GTP-binding proteins providing energy. This core complex can interact with components of the TIC complex to form a larger import complex. Interacts with ARSA1. The cofactor is Mg(2+).

Its subcellular location is the plastid. The protein resides in the chloroplast outer membrane. Its function is as follows. GTPase involved in protein precursor import into chloroplasts. Seems to recognize chloroplast-destined precursor proteins and regulate their presentation to the translocation channel through GTP hydrolysis. Functions as an essential component of the outer chloroplast membrane translocon (TOC) complex, which, in turn, catalyzes the import of nucleus-encoded precursor polypeptides from the cytoplasm to the chloroplast. This chain is Translocase of chloroplast 34 homolog, chloroplastic, found in Chlamydomonas reinhardtii (Chlamydomonas smithii).